We begin with the raw amino-acid sequence, 247 residues long: Small ribosomal subunit protein uS2 (247 aa).

This sequence belongs to the universal ribosomal protein uS2 family.

The sequence is that of Small ribosomal subunit protein uS2 from Cupriavidus pinatubonensis (strain JMP 134 / LMG 1197) (Cupriavidus necator (strain JMP 134)).